We begin with the raw amino-acid sequence, 1403 residues long: DNA-directed RNA polymerase subunit beta' (1403 aa).

Positions 71, 73, 86, and 89 each coordinate Zn(2+). Asp462, Asp464, and Asp466 together coordinate Mg(2+). Residues Cys811, Cys885, Cys892, and Cys895 each contribute to the Zn(2+) site.

This sequence belongs to the RNA polymerase beta' chain family. In terms of assembly, the RNAP catalytic core consists of 2 alpha, 1 beta, 1 beta' and 1 omega subunit. When a sigma factor is associated with the core the holoenzyme is formed, which can initiate transcription. Requires Mg(2+) as cofactor. The cofactor is Zn(2+).

The enzyme catalyses RNA(n) + a ribonucleoside 5'-triphosphate = RNA(n+1) + diphosphate. Functionally, DNA-dependent RNA polymerase catalyzes the transcription of DNA into RNA using the four ribonucleoside triphosphates as substrates. This chain is DNA-directed RNA polymerase subunit beta', found in Bartonella tribocorum (strain CIP 105476 / IBS 506).